The sequence spans 102 residues: Co-chaperonin GroES (102 aa).

Belongs to the GroES chaperonin family. In terms of assembly, heptamer of 7 subunits arranged in a ring. Interacts with the chaperonin GroEL.

It localises to the cytoplasm. In terms of biological role, together with the chaperonin GroEL, plays an essential role in assisting protein folding. The GroEL-GroES system forms a nano-cage that allows encapsulation of the non-native substrate proteins and provides a physical environment optimized to promote and accelerate protein folding. GroES binds to the apical surface of the GroEL ring, thereby capping the opening of the GroEL channel. The polypeptide is Co-chaperonin GroES (Chlamydia felis (strain Fe/C-56) (Chlamydophila felis)).